We begin with the raw amino-acid sequence, 394 residues long: MRFSVVETFHGHRGRLGNICGLRIGTGEQCLDTPTCLLYTQAGSAPHLTRDMLHKLGDVENLPALFPLPPITSFVDSVMQFGKGLGSFVALQSHPSFIRIQDPMVTTPSGFNDKAGVSVWDQGGRVHLNPLSFTRMMEAFQPTCYQALCDSDTPQDASRKRLQRAVDRSVSLLDQCLAMKADSSCLQHSAILGSVQGGYNRDFREISAKETAKRDVDGFVIEGFHVNGPQTKSLKFEEVAEILEEVIALLPQDKPRFLHGVLRPEFILKAVLYGIDIFDASLAHAATEAGCALVFNCSSDKDLELMLGRDLLDQELEMDMKNARHREDFVPLLESCACYACTNFTRAYIHHLLNTGEMLGQVLLSLHNIHHFLGFLKSIRKFMVQHGAKELNGN.

4 residues coordinate Zn(2+): C336, C338, C341, and H367.

It belongs to the queuine tRNA-ribosyltransferase family. QTRT2 subfamily. Heterodimer of a catalytic subunit and an accessory subunit. It depends on Zn(2+) as a cofactor.

The protein localises to the cytoplasm. Non-catalytic subunit of the queuine tRNA-ribosyltransferase (TGT) that catalyzes the base-exchange of a guanine (G) residue with queuine (Q) at position 34 (anticodon wobble position) in tRNAs with GU(N) anticodons (tRNA-Asp, -Asn, -His and -Tyr), resulting in the hypermodified nucleoside queuosine (7-(((4,5-cis-dihydroxy-2-cyclopenten-1-yl)amino)methyl)-7-deazaguanosine). The protein is Queuine tRNA-ribosyltransferase accessory subunit 2 of Ixodes scapularis (Black-legged tick).